An 86-amino-acid polypeptide reads, in one-letter code: MKTLLLTLVVVTIVCLDLGYTLTCLNCPEMFCGKFQICRNGEKICFKKLHQRRPFSLRYIRGCAATCPETKPRDMVECCSTDRCNR.

Positions 1 to 21 are cleaved as a signal peptide; sequence MKTLLLTLVVVTIVCLDLGYT. Intrachain disulfides connect Cys24/Cys45, Cys27/Cys32, Cys38/Cys63, Cys67/Cys78, and Cys79/Cys84.

This sequence belongs to the three-finger toxin family. Ancestral subfamily. Orphan group II sub-subfamily. Expressed by the venom gland.

The protein resides in the secreted. In terms of biological role, binds with low affinity to muscular (alpha-1-beta-1-delta-epsilon/CHRNA1-CHRNB1-CHRND-CHRNE) and very low affinity to neuronal (alpha-7/CHRNA7) nicotinic acetylcholine receptor (nAChR). This chain is Probable weak neurotoxin NNAM2, found in Naja atra (Chinese cobra).